Here is a 370-residue protein sequence, read N- to C-terminus: MEKYEPVREIGAGNFGVAKLMRNKETRELVAMKFIERGNRIDENVFREIVNHRSLRHPNIIRFKEVVVTGRHLAIVMEYAAGGELFERICEAGRFHEDEARYFFQQLVCGVSYCHAMQICHRDLKLENTLLDGSPAPRLKICDFGYSKSSLLHSRPKSTVGTPAYIAPEVLSRREYDGKLADVWSCGVTLYVMLVGAYPFEDPKDPKNFRKTISRIMSVQYKIPEYVHVSQPCRHLLSRIFVANPYKRISMGEIKSHPWFLKNLPRELKEEAQAVYYNRRGADHAASSASSAAAAAAFSPQSVEDIMRIVQEAQTVPKPDKPVSGYGWGTDDDDDDQQPAEEEDEEDDYDRTVREVHASVDLDMSNLQIS.

A Protein kinase domain is found at 4–260 (YEPVREIGAG…MGEIKSHPWF (257 aa)). ATP is bound by residues 10–18 (IGAGNFGVA) and lysine 33. The active-site Proton acceptor is the aspartate 123. Residues 312–370 (EAQTVPKPDKPVSGYGWGTDDDDDDQQPAEEEDEEDDYDRTVREVHASVDLDMSNLQIS) form a disordered region. A compositionally biased stretch (acidic residues) spans 330 to 349 (TDDDDDDQQPAEEEDEEDDY). Basic and acidic residues predominate over residues 350–360 (DRTVREVHASV).

Belongs to the protein kinase superfamily. Ser/Thr protein kinase family. May be phosphorylated. As to expression, expressed in leaf blades, leaf sheaths and roots. Expressed in shoots and roots of young seedlings.

It localises to the cytoplasm. It is found in the nucleus. It catalyses the reaction L-seryl-[protein] + ATP = O-phospho-L-seryl-[protein] + ADP + H(+). The enzyme catalyses L-threonyl-[protein] + ATP = O-phospho-L-threonyl-[protein] + ADP + H(+). Its activity is regulated as follows. Activated by hyperosmotic stress. In terms of biological role, may play a role in signal transduction of hyperosmotic response. The polypeptide is Serine/threonine-protein kinase SAPK5 (SAPK5) (Oryza sativa subsp. japonica (Rice)).